The following is a 607-amino-acid chain: Dolichyl-diphosphooligosaccharide--protein glycosyltransferase subunit 1 (607 aa).

Positions 1 to 23 (MEAPAARLFLLLLLGTWAPAPGS) are cleaved as a signal peptide. The Lumenal portion of the chain corresponds to 24–434 (ASSEAPPLIN…VVHYTFNKVL (411 aa)). An N6-acetyllysine modification is found at Lys-187. Asn-299 is a glycosylation site (N-linked (GlcNAc...) asparagine). Residues 435–455 (MLQEPLLVVAAFYILFFTVII) traverse the membrane as a helical segment. The Cytoplasmic segment spans residues 456 to 607 (YVRLDFSITK…TKIDHILDAL (152 aa)). An N6-acetyllysine; alternate modification is found at Lys-538. Lys-538 participates in a covalent cross-link: Glycyl lysine isopeptide (Lys-Gly) (interchain with G-Cter in SUMO2); alternate.

Belongs to the OST1 family. In terms of assembly, component of the oligosaccharyltransferase (OST) complex. OST exists in two different complex forms which contain common core subunits RPN1, RPN2, OST48, OST4, DAD1 and TMEM258, either STT3A or STT3B as catalytic subunits, and form-specific accessory subunits. STT3A complex assembly occurs through the formation of 3 subcomplexes. Subcomplex 1 contains RPN1 and TMEM258, subcomplex 2 contains the STT3A-specific subunits STT3A, DC2/OSTC, and KCP2 as well as the core subunit OST4, and subcomplex 3 contains RPN2, DAD1, and OST48. The STT3A complex can form stable complexes with the Sec61 complex or with both the Sec61 and TRAP complexes. Interacts with TMEM35A/NACHO. Ubiquitinated by the ECS(ASB11) complex. Post-translationally, ufmylated by UFL1 in response to endoplasmic reticulum stress, promoting reticulophagy of endoplasmic reticulum sheets.

It is found in the endoplasmic reticulum membrane. Its pathway is protein modification; protein glycosylation. In terms of biological role, subunit of the oligosaccharyl transferase (OST) complex that catalyzes the initial transfer of a defined glycan (Glc(3)Man(9)GlcNAc(2) in eukaryotes) from the lipid carrier dolichol-pyrophosphate to an asparagine residue within an Asn-X-Ser/Thr consensus motif in nascent polypeptide chains, the first step in protein N-glycosylation. N-glycosylation occurs cotranslationally and the complex associates with the Sec61 complex at the channel-forming translocon complex that mediates protein translocation across the endoplasmic reticulum (ER). All subunits are required for a maximal enzyme activity. This is Dolichyl-diphosphooligosaccharide--protein glycosyltransferase subunit 1 from Pongo abelii (Sumatran orangutan).